A 1358-amino-acid polypeptide reads, in one-letter code: Insulin-like growth factor 1 receptor (1358 aa).

Positions 1–25 (MKAELVPVCTAWILGLLLCLGPAAA) are cleaved as a signal peptide. The cysteines at positions 28 and 47 are disulfide-linked. 3 N-linked (GlcNAc...) asparagine glycosylation sites follow: asparagine 74, asparagine 99, and asparagine 132. 13 disulfides stabilise this stretch: cysteine 147-cysteine 175, cysteine 179-cysteine 202, cysteine 189-cysteine 208, cysteine 212-cysteine 221, cysteine 216-cysteine 227, cysteine 228-cysteine 236, cysteine 232-cysteine 245, cysteine 248-cysteine 257, cysteine 261-cysteine 273, cysteine 279-cysteine 299, cysteine 303-cysteine 317, cysteine 320-cysteine 324, and cysteine 328-cysteine 347. An N-linked (GlcNAc...) asparagine glycan is attached at asparagine 241. An N-linked (GlcNAc...) asparagine glycan is attached at asparagine 310. N-linked (GlcNAc...) asparagine glycosylation is found at asparagine 411 and asparagine 432. Residues cysteine 449 and cysteine 482 are joined by a disulfide bond. 4 Fibronectin type-III domains span residues 483–603 (ESHV…TDAA), 604–702 (VPSI…TEAE), 727–818 (PRPN…FVFA), and 829–924 (IPGI…LKPD). N-linked (GlcNAc...) asparagine glycans are attached at residues asparagine 488, asparagine 528, asparagine 616, asparagine 634, and asparagine 669. The segment at 670–691 (GTIDTEGGTEPTKPEGSVGEKG) is disordered. Residues 735–934 (DVLAVGNSTV…VRNNILQMVV (200 aa)) are Extracellular-facing. N-linked (GlcNAc...) asparagine glycosylation is found at asparagine 741, asparagine 750, asparagine 758, asparagine 895, and asparagine 908. Residues 935-955 (AIPLALSFLLVGIISIVCFVF) form a helical membrane-spanning segment. Over 956-1358 (KKRNSNRLGN…ALPLPQSSAC (403 aa)) the chain is Cytoplasmic. Tyrosine 976 carries the phosphotyrosine; by autocatalysis modification. The region spanning 995-1270 (ITMNRELGQG…SIKDELDPGF (276 aa)) is the Protein kinase domain. ATP-binding positions include 1001-1009 (LGQGSFGMV) and lysine 1029. Catalysis depends on aspartate 1131, which acts as the Proton acceptor. Phosphotyrosine; by autocatalysis occurs at positions 1157, 1161, and 1162. Residues 1336 to 1358 (PYAHMNGGRKNERALPLPQSSAC) are disordered.

This sequence belongs to the protein kinase superfamily. Tyr protein kinase family. Insulin receptor subfamily. Tetramer of 2 alpha and 2 beta chains linked by disulfide bonds. The alpha chains contribute to the formation of the ligand-binding domain, while the beta chain carries the kinase domain. It depends on Mn(2+) as a cofactor. Post-translationally, the cytoplasmic domain of the beta subunit is autophosphorylated on Tyr residues in response to low concentrations of insulin-like growth factor (IGF1) and higher concentrations of insulin.

The protein resides in the cell membrane. The catalysed reaction is L-tyrosyl-[protein] + ATP = O-phospho-L-tyrosyl-[protein] + ADP + H(+). Its activity is regulated as follows. Autophosphorylation activates the kinase activity. Its function is as follows. This receptor binds insulin-like growth factor 1 (IGF1) with a high affinity and IGF2 with a lower affinity. It has a tyrosine-protein kinase activity, which is necessary for the activation of the IGF1-stimulated downstream signaling cascade. Plays a role in oocyte maturation. Promotes head development by inhibiting Wnt signaling during embryogenesis. This Xenopus laevis (African clawed frog) protein is Insulin-like growth factor 1 receptor (igf1r).